A 381-amino-acid chain; its full sequence is Chaperone protein DnaJ (381 aa).

The J domain maps to 5–70; sequence DYYDVLGVSK…EKKAAYDRFG (66 aa). Residues 140-218 form a CR-type zinc finger; the sequence is GLQKTINVPT…CRGQGRVEKD (79 aa). Zn(2+)-binding residues include Cys153, Cys156, Cys170, Cys173, Cys192, Cys195, Cys206, and Cys209. CXXCXGXG motif repeat units follow at residues 153 to 160, 170 to 177, 192 to 199, and 206 to 213; these read CSSCEGTG, CPTCSGMG, CPTCSGLG, and CKSCRGQG.

The protein belongs to the DnaJ family. As to quaternary structure, homodimer. Requires Zn(2+) as cofactor.

Its subcellular location is the cytoplasm. In terms of biological role, participates actively in the response to hyperosmotic and heat shock by preventing the aggregation of stress-denatured proteins and by disaggregating proteins, also in an autonomous, DnaK-independent fashion. Unfolded proteins bind initially to DnaJ; upon interaction with the DnaJ-bound protein, DnaK hydrolyzes its bound ATP, resulting in the formation of a stable complex. GrpE releases ADP from DnaK; ATP binding to DnaK triggers the release of the substrate protein, thus completing the reaction cycle. Several rounds of ATP-dependent interactions between DnaJ, DnaK and GrpE are required for fully efficient folding. Also involved, together with DnaK and GrpE, in the DNA replication of plasmids through activation of initiation proteins. The sequence is that of Chaperone protein DnaJ from Ruegeria pomeroyi (strain ATCC 700808 / DSM 15171 / DSS-3) (Silicibacter pomeroyi).